The following is a 276-amino-acid chain: MGIIDVQRSHLTATPSKERDAPAHPPPTILPVCILFPYTSIALPVLMYYIPEKGQFDQNPFLKLIAILPPCLYSAVQFPLLFLGNPESSCTPRPALYATLYLLLDASLLAFSAISILSIAAFTTTEWNSDEVVAVCSTLLPSLLVLPAHLLSTSCALTPGSIGFTDSSVDILIDLLMVSLLAAGLTLNVDESWRFFPYICISSLVLVLAKLLRKSSSMPRRDPAPAPAWRIAAFVLIFGLSMFVYFSILHECLLIFGNHFPWFPSQAPSNDLTNKW.

A disordered region spans residues 1–24 (MGIIDVQRSHLTATPSKERDAPAH).

Belongs to the UPF0328 family.

The chain is UPF0328 protein ECU08_2080 from Encephalitozoon cuniculi (strain GB-M1) (Microsporidian parasite).